The sequence spans 396 residues: Protein GTS1 (396 aa).

The Arf-GAP domain occupies 14 to 141 (DRELKELINS…FRYDEIKPED (128 aa)). The C4-type zinc-finger motif lies at 30-53 (CGECGNFYPTWCSVNLGVFLCGRC). The segment covering 148 to 161 (DFDGESDRFDERNR) has biased composition (basic and acidic residues). Disordered stretches follow at residues 148-194 (DFDG…SGSR) and 233-266 (KSSSSRNSVSAAATTSTPPLPRRRATTSGPQPAI). A Phosphoserine modification is found at Ser-153. Tyr-181 carries the post-translational modification Phosphotyrosine. Phosphoserine is present on residues Ser-184 and Ser-187. The UBA domain occupies 193-234 (SRYSRQLAELKDMGFGDTNKNLDALSSAHGNINRAIDYLEKS). The segment covering 234–249 (SSSSRNSVSAAATTST) has biased composition (low complexity). A Phosphoserine modification is found at Ser-240. At Thr-249 the chain carries Phosphothreonine.

The protein resides in the nucleus. Its function is as follows. Appears to modulate the timing of budding to obtain an appropriate cell size independent of the DNA replication cycle. Transcription factor involved in both heat resistance and flocculation. In Saccharomyces cerevisiae (strain ATCC 204508 / S288c) (Baker's yeast), this protein is Protein GTS1 (GTS1).